The sequence spans 132 residues: D-ribose pyranase (132 aa).

Residue histidine 20 is the Proton donor of the active site. Substrate contacts are provided by residues aspartate 28, histidine 99, and 121–123; that span reads YSN.

This sequence belongs to the RbsD / FucU family. RbsD subfamily. As to quaternary structure, homodecamer.

It is found in the cytoplasm. The enzyme catalyses beta-D-ribopyranose = beta-D-ribofuranose. It participates in carbohydrate metabolism; D-ribose degradation; D-ribose 5-phosphate from beta-D-ribopyranose: step 1/2. In terms of biological role, catalyzes the interconversion of beta-pyran and beta-furan forms of D-ribose. The polypeptide is D-ribose pyranase (Lactococcus lactis subsp. lactis (strain IL1403) (Streptococcus lactis)).